We begin with the raw amino-acid sequence, 171 residues long: Adenine phosphoribosyltransferase (171 aa).

This sequence belongs to the purine/pyrimidine phosphoribosyltransferase family. Homodimer.

The protein resides in the cytoplasm. It carries out the reaction AMP + diphosphate = 5-phospho-alpha-D-ribose 1-diphosphate + adenine. The protein operates within purine metabolism; AMP biosynthesis via salvage pathway; AMP from adenine: step 1/1. Catalyzes a salvage reaction resulting in the formation of AMP, that is energically less costly than de novo synthesis. This is Adenine phosphoribosyltransferase from Methylococcus capsulatus (strain ATCC 33009 / NCIMB 11132 / Bath).